Here is a 141-residue protein sequence, read N- to C-terminus: Large ribosomal subunit protein uL16 (141 aa).

Basic residues predominate over residues 1 to 17 (MLQPKRTKYRKVQKGKM). A disordered region spans residues 1 to 29 (MLQPKRTKYRKVQKGKMKGNSQRGHELSN).

Belongs to the universal ribosomal protein uL16 family. Part of the 50S ribosomal subunit.

Binds 23S rRNA and is also seen to make contacts with the A and possibly P site tRNAs. In Flavobacterium psychrophilum (strain ATCC 49511 / DSM 21280 / CIP 103535 / JIP02/86), this protein is Large ribosomal subunit protein uL16.